Here is a 394-residue protein sequence, read N- to C-terminus: Enoyl-[acyl-carrier-protein] reductase [NADH] (394 aa).

NAD(+)-binding positions include 48 to 53, 74 to 75, 111 to 112, and 139 to 140; these read GASTGY, YE, DA, and LA. Y225 is a substrate binding site. The active-site Proton donor is the Y235. Residues K244 and 273 to 275 each bind NAD(+); that span reads LVT.

Belongs to the TER reductase family. As to quaternary structure, monomer.

It carries out the reaction a 2,3-saturated acyl-[ACP] + NAD(+) = a (2E)-enoyl-[ACP] + NADH + H(+). The protein operates within lipid metabolism; fatty acid biosynthesis. Involved in the final reduction of the elongation cycle of fatty acid synthesis (FAS II). Catalyzes the reduction of a carbon-carbon double bond in an enoyl moiety that is covalently linked to an acyl carrier protein (ACP). The protein is Enoyl-[acyl-carrier-protein] reductase [NADH] of Opitutus terrae (strain DSM 11246 / JCM 15787 / PB90-1).